The primary structure comprises 1435 residues: Protein SPP41 (1435 aa).

7 disordered regions span residues Val-16–Ile-74, Val-88–Leu-265, Ala-286–Gln-309, Glu-322–Phe-424, Glu-442–Asp-482, Ser-519–Pro-708, and Gln-934–Thr-972. Acidic residues predominate over residues Gly-27–Asp-42. Basic and acidic residues-rich tracts occupy residues Ile-53–His-63, Glu-98–Gln-127, and Leu-139–Val-154. Residues Gln-171–Asn-190 form the UIM domain. Positions Glu-196 to Pro-205 are enriched in basic and acidic residues. A compositionally biased stretch (basic residues) spans Ser-211–Ser-223. A compositionally biased stretch (basic and acidic residues) spans Lys-224–Ser-234. Positions Lys-235–Asp-249 are enriched in basic residues. The segment covering Ala-286–Thr-301 has biased composition (polar residues). Positions Lys-345–Ala-355 are enriched in basic and acidic residues. The span at Lys-367–Thr-383 shows a compositional bias: basic residues. Over residues Ser-384–Ser-398 the composition is skewed to low complexity. Polar residues-rich tracts occupy residues Glu-442–Asp-451 and Asp-459–Asp-482. Basic and acidic residues-rich tracts occupy residues Leu-524 to Thr-548, Lys-610 to Glu-628, and Lys-637 to Glu-652. A compositionally biased stretch (basic residues) spans Lys-665 to Arg-674. Residues Trp-676 to Pro-691 are compositionally biased toward basic and acidic residues. Positions Lys-683 to Lys-699 match the Nuclear localization signal motif. A compositionally biased stretch (basic residues) spans Arg-692–Lys-706. Lys-981 participates in a covalent cross-link: Glycyl lysine isopeptide (Lys-Gly) (interchain with G-Cter in SUMO). Over residues Lys-1005–Ser-1014 the composition is skewed to basic and acidic residues. Positions Lys-1005–Pro-1125 are disordered. The residue at position 1014 (Ser-1014) is a Phosphoserine. The segment covering Asn-1021 to Gln-1032 has biased composition (polar residues). Composition is skewed to basic and acidic residues over residues Glu-1033–Ala-1082 and Leu-1091–Leu-1103. Ser-1067 is modified (phosphoserine). Polar residues predominate over residues Ala-1108–Gly-1123. Residue Lys-1154 forms a Glycyl lysine isopeptide (Lys-Gly) (interchain with G-Cter in SUMO) linkage.

As to quaternary structure, interacts with PRP8 and RAP1.

It localises to the nucleus. Functionally, negative regulator of PRP3 and PRP4 genes. In Saccharomyces cerevisiae (strain ATCC 204508 / S288c) (Baker's yeast), this protein is Protein SPP41 (SPP41).